Reading from the N-terminus, the 403-residue chain is Probable tRNA sulfurtransferase (403 aa).

One can recognise a THUMP domain in the interval 61-166 (EAIAESLKDV…SGYSYIMCDE (106 aa)). ATP contacts are provided by residues 184 to 185 (LL), 209 to 210 (HF), Arg-266, Gly-288, and Gln-297.

The protein belongs to the ThiI family.

Its subcellular location is the cytoplasm. The catalysed reaction is [ThiI sulfur-carrier protein]-S-sulfanyl-L-cysteine + a uridine in tRNA + 2 reduced [2Fe-2S]-[ferredoxin] + ATP + H(+) = [ThiI sulfur-carrier protein]-L-cysteine + a 4-thiouridine in tRNA + 2 oxidized [2Fe-2S]-[ferredoxin] + AMP + diphosphate. It carries out the reaction [ThiS sulfur-carrier protein]-C-terminal Gly-Gly-AMP + S-sulfanyl-L-cysteinyl-[cysteine desulfurase] + AH2 = [ThiS sulfur-carrier protein]-C-terminal-Gly-aminoethanethioate + L-cysteinyl-[cysteine desulfurase] + A + AMP + 2 H(+). Its pathway is cofactor biosynthesis; thiamine diphosphate biosynthesis. Functionally, catalyzes the ATP-dependent transfer of a sulfur to tRNA to produce 4-thiouridine in position 8 of tRNAs, which functions as a near-UV photosensor. Also catalyzes the transfer of sulfur to the sulfur carrier protein ThiS, forming ThiS-thiocarboxylate. This is a step in the synthesis of thiazole, in the thiamine biosynthesis pathway. The sulfur is donated as persulfide by IscS. This is Probable tRNA sulfurtransferase from Bacillus cytotoxicus (strain DSM 22905 / CIP 110041 / 391-98 / NVH 391-98).